Here is a 473-residue protein sequence, read N- to C-terminus: MQLHGKMTATAKSCALDFLDFVNASPTPYHAVQNLAEHYMSHGFQYLSEKSDWQSKIEPGNSYFVTRNKSSIIAFSIGKKWKPGNGFSIIATHTDSPTLRLKPKSQKSAYGYLQVGVEKYGGGIWHTWFDRDLSLAGRVMVEEEDGRVIQYNVHIDRPLLRIPTLAIHLDPSANSSFSFNMETEFVPLIGLENELAKEETSDNGDKYHHPVLLSLLANEISKSLETTIDPSKIVDFELILGDAEKARLGGIHEEFVFSPRLDNLGMTFCASQALTKSLENNSLDNESCVRVVPSFDHEEIGSVSAQGAESTFLPAVLQRICELGKESSLFSISMVKSFLVSADMAHAMHPNYSSRYENSNTPFLNKGTVIKVNANQRYTTNSAGIVLLKKVAQLADVPIQSFVVRNDSPCGSTIGPKLAAMTGMRTLDLGNPMLSMHSCREMCGSKDFEYAVVLFSSFFQNFANLEEKIIIDE.

H93 contacts Zn(2+). H168 provides a ligand contact to substrate. Residues D262, E298, E299, and D343 each coordinate Zn(2+). E298 contacts substrate. Substrate is bound by residues D343, H346, K371, and Y378. H437 provides a ligand contact to Zn(2+).

The protein belongs to the peptidase M18 family. As to quaternary structure, tetrahedron-shaped homododecamer built from six homodimers. Interacts with autophagy receptor Nbr1. Zn(2+) is required as a cofactor.

The protein localises to the cytoplasm. It is found in the vacuole lumen. The catalysed reaction is Release of an N-terminal aspartate or glutamate from a peptide, with a preference for aspartate.. Aspartyl aminopeptidase that is able to remove aspartyl residue at N-terminus of angiotensin I. Also acts as a chaperone and efficiently suppressed the thermal aggregation of citrate synthase. This Schizosaccharomyces pombe (strain 972 / ATCC 24843) (Fission yeast) protein is Aspartyl aminopeptidase 1 (ape4).